Reading from the N-terminus, the 254-residue chain is Geranylgeranylglyceryl phosphate synthase (254 aa).

Mg(2+) is bound by residues aspartate 27 and serine 56. Sn-glycerol 1-phosphate-binding positions include 174–180 (YLEAGSG), 212–213 (GG), and 234–235 (GT).

Belongs to the GGGP/HepGP synthase family. Group II subfamily. Homohexamer. Mg(2+) is required as a cofactor.

Its subcellular location is the cytoplasm. The catalysed reaction is sn-glycerol 1-phosphate + (2E,6E,10E)-geranylgeranyl diphosphate = sn-3-O-(geranylgeranyl)glycerol 1-phosphate + diphosphate. The protein operates within membrane lipid metabolism; glycerophospholipid metabolism. In terms of biological role, prenyltransferase that catalyzes the transfer of the geranylgeranyl moiety of geranylgeranyl diphosphate (GGPP) to the C3 hydroxyl of sn-glycerol-1-phosphate (G1P). This reaction is the first ether-bond-formation step in the biosynthesis of archaeal membrane lipids. In Aeropyrum pernix (strain ATCC 700893 / DSM 11879 / JCM 9820 / NBRC 100138 / K1), this protein is Geranylgeranylglyceryl phosphate synthase.